The primary structure comprises 121 residues: MYMVQENKNFATAQAKSIRVSSRKLNLVAAFIRNMKVSEALVQLTFSPKRIAKVVKDCLQSAVANAENNLGLDIDRLVITKATVGKALVMKRVMPRAKGRATRINKFFSNLYITVTEKEDN.

It belongs to the universal ribosomal protein uL22 family. Part of the 50S ribosomal subunit.

Functionally, this protein binds specifically to 23S rRNA; its binding is stimulated by other ribosomal proteins, e.g. L4, L17, and L20. It is important during the early stages of 50S assembly. It makes multiple contacts with different domains of the 23S rRNA in the assembled 50S subunit and ribosome. The globular domain of the protein is located near the polypeptide exit tunnel on the outside of the subunit, while an extended beta-hairpin is found that lines the wall of the exit tunnel in the center of the 70S ribosome. The sequence is that of Large ribosomal subunit protein uL22 from Rickettsia massiliae (strain Mtu5).